The sequence spans 638 residues: Exocyst complex component EXO70A1 (638 aa).

Residues 163–190 form a disordered region; sequence FDGLPNSLRPSSDGDGGGKPHGGHHNDD.

Belongs to the EXO70 family. The exocyst complex is composed of SEC3, SEC5, SEC6, SEC8, SEC10, EXO70A1 and EXO84B. Interacts with SEC3A and EXO84B. Co-localizes with FPP3/VETH1, FPP2/VETH2 and COG2 in vesicle-like small motile compartments. May interact with COG2.

The protein localises to the cytoplasm. It is found in the cytosol. The protein resides in the cytoskeleton. Its subcellular location is the phragmoplast. It localises to the cell membrane. The protein localises to the secreted. It is found in the cell wall. Its function is as follows. Component of the exocyst complex involved in the docking of exocytic vesicles with fusion sites on the plasma membrane during regulated or polarized secretion. Involved in polarized cell growth and organ morphogenesis. Involved in polarized cell growth and organ morphogenesis. During cytokinesis, involved in cell plate initiation, cell plate maturation and formation of new primary cell wall. Participates in polarized pectin delivery required for the polarized development of the mucilage-producing volcano cells of the seed coat. Involved in the recycling and localization of auxin efflux carriers PIN1 and PIN2, and thus in polar auxin transport regulation. Functions in vesicle trafficking in tracheary elements to regulate patterned secondary cell wall (SCW) thickening. The polypeptide is Exocyst complex component EXO70A1 (Arabidopsis thaliana (Mouse-ear cress)).